A 202-amino-acid chain; its full sequence is Large ribosomal subunit protein bL17 (202 aa).

Positions 132 to 202 (DAAQKAASAG…TEVEKADDDK (71 aa)) are disordered. Positions 134-168 (AQKAASAGAQEVTAAAAPQAAVEPEAVETEASAET) are enriched in low complexity. Residues 169–193 (AEAEVETAEVEAVDEASAEEADEAT) show a composition bias toward acidic residues.

The protein belongs to the bacterial ribosomal protein bL17 family. As to quaternary structure, part of the 50S ribosomal subunit. Contacts protein L32.

The polypeptide is Large ribosomal subunit protein bL17 (Mycolicibacterium vanbaalenii (strain DSM 7251 / JCM 13017 / BCRC 16820 / KCTC 9966 / NRRL B-24157 / PYR-1) (Mycobacterium vanbaalenii)).